Here is a 358-residue protein sequence, read N- to C-terminus: Protein RecA (358 aa).

ATP is bound at residue 78–85 (GPESGGKT).

Belongs to the RecA family.

The protein localises to the cytoplasm. Functionally, can catalyze the hydrolysis of ATP in the presence of single-stranded DNA, the ATP-dependent uptake of single-stranded DNA by duplex DNA, and the ATP-dependent hybridization of homologous single-stranded DNAs. It interacts with LexA causing its activation and leading to its autocatalytic cleavage. The chain is Protein RecA from Deinococcus geothermalis (strain DSM 11300 / CIP 105573 / AG-3a).